The primary structure comprises 43 residues: Cytochrome b559 subunit beta (43 aa).

Residues 18 to 34 traverse the membrane as a helical segment; sequence WLAIHGLAIPTVFFLGG. H22 is a heme binding site.

The protein belongs to the PsbE/PsbF family. As to quaternary structure, heterodimer of an alpha subunit and a beta subunit. PSII is composed of 1 copy each of membrane proteins PsbA, PsbB, PsbC, PsbD, PsbE, PsbF, PsbH, PsbI, PsbJ, PsbK, PsbL, PsbM, PsbT, PsbX, PsbY, PsbZ, Psb30/Ycf12, at least 3 peripheral proteins of the oxygen-evolving complex and a large number of cofactors. It forms dimeric complexes. Heme b serves as cofactor.

The protein localises to the plastid. It localises to the chloroplast thylakoid membrane. Functionally, this b-type cytochrome is tightly associated with the reaction center of photosystem II (PSII). PSII is a light-driven water:plastoquinone oxidoreductase that uses light energy to abstract electrons from H(2)O, generating O(2) and a proton gradient subsequently used for ATP formation. It consists of a core antenna complex that captures photons, and an electron transfer chain that converts photonic excitation into a charge separation. The chain is Cytochrome b559 subunit beta from Phaeodactylum tricornutum (strain CCAP 1055/1).